We begin with the raw amino-acid sequence, 210 residues long: Na(+)-translocating NADH-quinone reductase subunit D (210 aa).

A run of 5 helical transmembrane segments spans residues 42 to 62, 72 to 92, 103 to 123, 131 to 151, and 178 to 198; these read FVMT…VSLI, IIVQ…ILKA, VFVG…AFAM, FIDG…VGFF, and NGLM…IWAI.

The protein belongs to the NqrDE/RnfAE family. In terms of assembly, composed of six subunits; NqrA, NqrB, NqrC, NqrD, NqrE and NqrF.

The protein localises to the cell inner membrane. The enzyme catalyses a ubiquinone + n Na(+)(in) + NADH + H(+) = a ubiquinol + n Na(+)(out) + NAD(+). NQR complex catalyzes the reduction of ubiquinone-1 to ubiquinol by two successive reactions, coupled with the transport of Na(+) ions from the cytoplasm to the periplasm. NqrA to NqrE are probably involved in the second step, the conversion of ubisemiquinone to ubiquinol. This is Na(+)-translocating NADH-quinone reductase subunit D from Vibrio cholerae serotype O1 (strain M66-2).